Here is a 214-residue protein sequence, read N- to C-terminus: tRNA (guanine-N(7)-)-methyltransferase (214 aa).

4 residues coordinate S-adenosyl-L-methionine: Glu43, Glu68, Asp95, and Asp117. Residue Asp117 is part of the active site. Substrate-binding positions include Lys121, Asp153, and 191 to 194; that span reads TEYE.

Belongs to the class I-like SAM-binding methyltransferase superfamily. TrmB family.

The catalysed reaction is guanosine(46) in tRNA + S-adenosyl-L-methionine = N(7)-methylguanosine(46) in tRNA + S-adenosyl-L-homocysteine. It participates in tRNA modification; N(7)-methylguanine-tRNA biosynthesis. In terms of biological role, catalyzes the formation of N(7)-methylguanine at position 46 (m7G46) in tRNA. The chain is tRNA (guanine-N(7)-)-methyltransferase from Brevibacillus brevis (strain 47 / JCM 6285 / NBRC 100599).